The chain runs to 322 residues: Phosphatidylserine decarboxylase proenzyme (322 aa).

Residues Asp90, His147, and Ser254 each act as charge relay system; for autoendoproteolytic cleavage activity in the active site. Ser254 acts as the Schiff-base intermediate with substrate; via pyruvic acid; for decarboxylase activity in catalysis. A Pyruvic acid (Ser); by autocatalysis modification is found at Ser254. Residues 293-322 (PDAEPAPLPAEEIEAEHDASPLVDDKKDQV) are disordered. Over residues 308-322 (EHDASPLVDDKKDQV) the composition is skewed to basic and acidic residues.

It belongs to the phosphatidylserine decarboxylase family. PSD-B subfamily. Prokaryotic type I sub-subfamily. In terms of assembly, heterodimer of a large membrane-associated beta subunit and a small pyruvoyl-containing alpha subunit. It depends on pyruvate as a cofactor. In terms of processing, is synthesized initially as an inactive proenzyme. Formation of the active enzyme involves a self-maturation process in which the active site pyruvoyl group is generated from an internal serine residue via an autocatalytic post-translational modification. Two non-identical subunits are generated from the proenzyme in this reaction, and the pyruvate is formed at the N-terminus of the alpha chain, which is derived from the carboxyl end of the proenzyme. The autoendoproteolytic cleavage occurs by a canonical serine protease mechanism, in which the side chain hydroxyl group of the serine supplies its oxygen atom to form the C-terminus of the beta chain, while the remainder of the serine residue undergoes an oxidative deamination to produce ammonia and the pyruvoyl prosthetic group on the alpha chain. During this reaction, the Ser that is part of the protease active site of the proenzyme becomes the pyruvoyl prosthetic group, which constitutes an essential element of the active site of the mature decarboxylase.

It localises to the cell membrane. The catalysed reaction is a 1,2-diacyl-sn-glycero-3-phospho-L-serine + H(+) = a 1,2-diacyl-sn-glycero-3-phosphoethanolamine + CO2. It functions in the pathway phospholipid metabolism; phosphatidylethanolamine biosynthesis; phosphatidylethanolamine from CDP-diacylglycerol: step 2/2. Its function is as follows. Catalyzes the formation of phosphatidylethanolamine (PtdEtn) from phosphatidylserine (PtdSer). This Escherichia coli O9:H4 (strain HS) protein is Phosphatidylserine decarboxylase proenzyme.